Here is a 57-residue protein sequence, read N- to C-terminus: Large ribosomal subunit protein bL32 (57 aa).

A disordered region spans residues 1-23; that stretch reads MAVPKKKTSKSKRDKRRATWRHK.

Belongs to the bacterial ribosomal protein bL32 family.

The chain is Large ribosomal subunit protein bL32 from Nostoc sp. (strain PCC 7120 / SAG 25.82 / UTEX 2576).